A 295-amino-acid polypeptide reads, in one-letter code: UDP-N-acetylenolpyruvoylglucosamine reductase (295 aa).

In terms of domain architecture, FAD-binding PCMH-type spans 26-189; it reads VGGQADILFK…IEAEFKGVSS (164 aa). Residue Arg169 is part of the active site. Catalysis depends on Cys218, which acts as the Proton donor. Glu288 is an active-site residue.

It belongs to the MurB family. It depends on FAD as a cofactor.

The protein localises to the cytoplasm. The catalysed reaction is UDP-N-acetyl-alpha-D-muramate + NADP(+) = UDP-N-acetyl-3-O-(1-carboxyvinyl)-alpha-D-glucosamine + NADPH + H(+). It participates in cell wall biogenesis; peptidoglycan biosynthesis. Cell wall formation. The protein is UDP-N-acetylenolpyruvoylglucosamine reductase of Wolbachia sp. subsp. Brugia malayi (strain TRS).